A 402-amino-acid polypeptide reads, in one-letter code: D-mannonate dehydratase (402 aa).

Substrate is bound by residues N37 and H122. Residue Y159 is the Proton donor/acceptor of the active site. Residue D210 participates in Mg(2+) binding. The Proton donor/acceptor role is filled by H212. Mg(2+) is bound by residues E236 and E262. E262, R283, H312, D316, and E339 together coordinate substrate.

The protein belongs to the mandelate racemase/muconate lactonizing enzyme family. GalD subfamily. Mg(2+) is required as a cofactor.

It carries out the reaction D-mannonate = 2-dehydro-3-deoxy-D-gluconate + H2O. Its pathway is carbohydrate metabolism; pentose and glucuronate interconversion. In terms of biological role, catalyzes the dehydration of D-mannonate. Has no detectable activity with a panel of 70 other acid sugars (in vitro). In Rhizorhabdus wittichii (strain DSM 6014 / CCUG 31198 / JCM 15750 / NBRC 105917 / EY 4224 / RW1) (Sphingomonas wittichii), this protein is D-mannonate dehydratase.